The primary structure comprises 166 residues: NAD(P)H-quinone oxidoreductase subunit I, chloroplastic (166 aa).

2 4Fe-4S ferredoxin-type domains span residues 55-84 and 95-124; these read GRIH…VDWK and LNYS…MTEE. [4Fe-4S] cluster-binding residues include Cys64, Cys67, Cys70, Cys74, Cys104, Cys107, Cys110, and Cys114.

This sequence belongs to the complex I 23 kDa subunit family. NDH is composed of at least 16 different subunits, 5 of which are encoded in the nucleus. The cofactor is [4Fe-4S] cluster.

Its subcellular location is the plastid. It localises to the chloroplast thylakoid membrane. It catalyses the reaction a plastoquinone + NADH + (n+1) H(+)(in) = a plastoquinol + NAD(+) + n H(+)(out). It carries out the reaction a plastoquinone + NADPH + (n+1) H(+)(in) = a plastoquinol + NADP(+) + n H(+)(out). Functionally, NDH shuttles electrons from NAD(P)H:plastoquinone, via FMN and iron-sulfur (Fe-S) centers, to quinones in the photosynthetic chain and possibly in a chloroplast respiratory chain. The immediate electron acceptor for the enzyme in this species is believed to be plastoquinone. Couples the redox reaction to proton translocation, and thus conserves the redox energy in a proton gradient. This is NAD(P)H-quinone oxidoreductase subunit I, chloroplastic from Stevia rebaudiana (Stevia).